Here is a 438-residue protein sequence, read N- to C-terminus: DNA primase DnaG (438 aa).

One can recognise a Toprim domain in the interval 169-243 (DSIIVVEGRA…DIDYVARAPY (75 aa)). The Mg(2+) site is built by Glu-175, Asp-217, and Asp-219.

This sequence belongs to the archaeal DnaG primase family. As to quaternary structure, forms a ternary complex with MCM helicase and DNA. Mg(2+) serves as cofactor.

The catalysed reaction is ssDNA + n NTP = ssDNA/pppN(pN)n-1 hybrid + (n-1) diphosphate.. Functionally, RNA polymerase that catalyzes the synthesis of short RNA molecules used as primers for DNA polymerase during DNA replication. This Methanococcus maripaludis (strain C5 / ATCC BAA-1333) protein is DNA primase DnaG.